Consider the following 340-residue polypeptide: 7,8-didemethyl-8-hydroxy-5-deazariboflavin synthase (340 aa).

One can recognise a Radical SAM core domain in the interval 25–256 (ATYSPAYTIV…SDITIQIPPN (232 aa)). 3 residues coordinate [4Fe-4S] cluster: Cys-39, Cys-43, and Cys-46.

The protein belongs to the radical SAM superfamily. CofG family. As to quaternary structure, consists of two subunits, CofG and CofH. The cofactor is [4Fe-4S] cluster.

The catalysed reaction is 5-amino-5-(4-hydroxybenzyl)-6-(D-ribitylimino)-5,6-dihydrouracil + S-adenosyl-L-methionine = 7,8-didemethyl-8-hydroxy-5-deazariboflavin + 5'-deoxyadenosine + L-methionine + NH4(+) + H(+). The protein operates within cofactor biosynthesis; coenzyme F0 biosynthesis. Catalyzes the radical-mediated synthesis of 7,8-didemethyl-8-hydroxy-5-deazariboflavin from 5-amino-5-(4-hydroxybenzyl)-6-(D-ribitylimino)-5,6-dihydrouracil. The polypeptide is 7,8-didemethyl-8-hydroxy-5-deazariboflavin synthase (Trichormus variabilis (strain ATCC 29413 / PCC 7937) (Anabaena variabilis)).